The primary structure comprises 64 residues: Neuropeptide-like 4 (64 aa).

The first 18 residues, 1–18 (MFKLLVVVFAALFAAALA), serve as a signal peptide directing secretion. 2 propeptides span residues 19 to 40 (VPAPVARANPAPIPIASPEPAP) and 63 to 64 (YG).

It is found in the secreted. In Drosophila melanogaster (Fruit fly), this protein is Neuropeptide-like 4 (Nplp4).